The chain runs to 160 residues: Large ribosomal subunit protein uL11 (160 aa).

This sequence belongs to the universal ribosomal protein uL11 family. As to quaternary structure, part of the ribosomal stalk of the 50S ribosomal subunit. Interacts with L10 and the large rRNA to form the base of the stalk. L10 forms an elongated spine to which L12 dimers bind in a sequential fashion forming a multimeric L10(L12)X complex.

Its function is as follows. Forms part of the ribosomal stalk which helps the ribosome interact with GTP-bound translation factors. This chain is Large ribosomal subunit protein uL11, found in Nanoarchaeum equitans (strain Kin4-M).